The primary structure comprises 170 residues: MGVEQPLGDNIVTASLDGLVNWARKTSIWPMTFGLACCAIEMMATGAAKHDLDRFGIIFRASPRQADCIIIAGTVTKKMLPVIKTVYEQMPEPKWVIAMGACACSGGVFDTYSVVQGIDEALPVDVYVPGCPPRPEALLYGIMKLQDKIGKERNSFGSAIGLGDRLEPAA.

Positions 37, 38, 102, and 131 each coordinate [4Fe-4S] cluster.

This sequence belongs to the complex I 20 kDa subunit family. In terms of assembly, NDH-1 is composed of 14 different subunits. Subunits NuoB, C, D, E, F, and G constitute the peripheral sector of the complex. [4Fe-4S] cluster serves as cofactor.

It localises to the cell inner membrane. It catalyses the reaction a quinone + NADH + 5 H(+)(in) = a quinol + NAD(+) + 4 H(+)(out). Its function is as follows. NDH-1 shuttles electrons from NADH, via FMN and iron-sulfur (Fe-S) centers, to quinones in the respiratory chain. The immediate electron acceptor for the enzyme in this species is believed to be ubiquinone. Couples the redox reaction to proton translocation (for every two electrons transferred, four hydrogen ions are translocated across the cytoplasmic membrane), and thus conserves the redox energy in a proton gradient. The polypeptide is NADH-quinone oxidoreductase subunit B (Geotalea daltonii (strain DSM 22248 / JCM 15807 / FRC-32) (Geobacter daltonii)).